Here is a 1088-residue protein sequence, read N- to C-terminus: DNA damage-binding protein 1b (1088 aa).

It belongs to the DDB1 family. Interacts with DDA1. Binds to KTN80.2/DWA3. Interacts with HTD1.

It localises to the nucleus. It functions in the pathway protein modification; protein ubiquitination. Functionally, component of light signal transduction machinery. Involved in repression of photomorphogenesis in darkness. Plays a role in DNA repair by forming with DDB2 the UV-damaged DNA-binding protein complex (UV-DDB). The chain is DNA damage-binding protein 1b from Arabidopsis thaliana (Mouse-ear cress).